The primary structure comprises 32 residues: Dermatoxin-J1 (32 aa).

Gln32 carries the glutamine amide modification.

In terms of tissue distribution, expressed by the skin glands.

Its subcellular location is the secreted. Its function is as follows. Antimicrobial peptide. The chain is Dermatoxin-J1 from Phasmahyla jandaia (Jandaia leaf frog).